Here is a 225-residue protein sequence, read N- to C-terminus: ATP-dependent dethiobiotin synthetase BioD (225 aa).

Residue 12–17 (EVGKTY) coordinates ATP. Thr-16 serves as a coordination point for Mg(2+). The active site involves Lys-37. A substrate-binding site is contributed by Ser-41. ATP contacts are provided by residues Asp-52, 114–117 (EGAG), and 174–175 (NC). Mg(2+)-binding residues include Asp-52 and Glu-114.

Belongs to the dethiobiotin synthetase family. As to quaternary structure, homodimer. Mg(2+) is required as a cofactor.

It localises to the cytoplasm. It carries out the reaction (7R,8S)-7,8-diammoniononanoate + CO2 + ATP = (4R,5S)-dethiobiotin + ADP + phosphate + 3 H(+). It functions in the pathway cofactor biosynthesis; biotin biosynthesis; biotin from 7,8-diaminononanoate: step 1/2. Functionally, catalyzes a mechanistically unusual reaction, the ATP-dependent insertion of CO2 between the N7 and N8 nitrogen atoms of 7,8-diaminopelargonic acid (DAPA, also called 7,8-diammoniononanoate) to form a ureido ring. This Francisella tularensis subsp. novicida (strain U112) protein is ATP-dependent dethiobiotin synthetase BioD.